The sequence spans 239 residues: Probable transcriptional regulatory protein YeeI (239 aa).

Belongs to the TACO1 family. YeeN subfamily.

The protein resides in the cytoplasm. The chain is Probable transcriptional regulatory protein YeeI (yeeI) from Bacillus subtilis (strain 168).